The following is a 461-amino-acid chain: Probable outer membrane lipoprotein SilC (461 aa).

A signal peptide spans 1–17; it reads MFKLKLLSISTIFILAG. Cysteine 18 is lipidated: N-palmitoyl cysteine. The S-diacylglycerol cysteine moiety is linked to residue cysteine 18.

The protein belongs to the outer membrane factor (OMF) (TC 1.B.17) family.

The protein resides in the cell outer membrane. Component of the sil cation-efflux system that confers resistance to silver. May be part of a three-component cation/proton antiporter. The chain is Probable outer membrane lipoprotein SilC (silC) from Salmonella typhimurium.